The chain runs to 260 residues: Transmembrane protein 70, mitochondrial (260 aa).

The transit peptide at 1-81 (MLFLALGSPW…PVYWEGYVRF (81 aa)) directs the protein to the mitochondrion. Residues 82–102 (LNTPSDKSEDGRLIYTGNMAR) lie on the Mitochondrial matrix side of the membrane. A helical transmembrane segment spans residues 103 to 123 (AVFGVKCFSYSTSLIGLTFLP). The Mitochondrial intermembrane portion of the chain corresponds to 124–141 (YIFTQNNAISESVPLPIQ). A helical transmembrane segment spans residues 142–162 (IIFYGIMGSFTVITPVLLHFI). The Mitochondrial matrix segment spans residues 163–260 (TKGYVIRLYH…SEEKRHKDDK (98 aa)).

It belongs to the TMEM70 family. As to quaternary structure, homooligomer. Interacts (homooligomer form) with ATP5MC1; this interaction facilitates the oligomer formation of subunit c/ATP5MC1 (c-ring) and the c-ring membrane insertion and also protects ATP5MC1 against intramitochondrial proteolysis. Interacts with the core subunits TMEM126B, NDUFAF1, ECSIT and ACAD9 of the MCIA complex. Interacts with ATP5MC3, TMEM242 and TIMMDC1. As to expression, lower expressed in the heart than in the liver (at protein level).

It localises to the mitochondrion inner membrane. In terms of biological role, scaffold protein that participates in the c-ring assembly of mitochondrial ATP synthase (F(1)F(0) ATP synthase or complex V) by facilitating the membrane insertion and oligomer formation of the subunit c/ATP5MC1 through its interaction. Therefore, participates in the early stage of mitochondrial ATP synthase biogenesis and also protects subunit c/ATP5MC1 against intramitochondrial proteolysis. In addition, binds the mitochondrial proton-transporting ATP synthase complexes I and may play a role in the stability of its membrane-bound subassemblies. The chain is Transmembrane protein 70, mitochondrial from Homo sapiens (Human).